Reading from the N-terminus, the 610-residue chain is MILTLAYFMLGTLLLGVFAEDTVSQIGINDSLWYPYDEALVLKPLPNNDLLLSFAFQLQSEPFDPAVSSMSYDAYEHYTTFPRAIPPLLESTATRQFHLRFTRGFWDALSWGQLPHAGKEAGASGVELWSQVQAMDQEQAFHNWKKLSNSLSGLFCSSLNFIDESRTTFPRRSYASDIGAPLFNSTEKLYLMRASLPNEPICTENLTPFIKLLPTRGKSGLTSLLDGHKLFDSLWNSISLDIATICSEDEDALCHYEMDARIEMVTHVPSALARGERPIPKPLDGNTLRCDTDKPFDSYQCFPLPEPSQTHFKLSQLFARPINNGNLFANRPTRICAEVDRSTWTAFLSVDDTIFSTHDNCFDLSNDQNEGGSGYDFILESTDTTKVTPIVPVPIHVSRSLTGNGQDRGGMRIVFHNDNDTPVKLIYFESLPWFMRVYLSSLQITSTTSPQLQENDIILDKYYLQAADRKRPGHLEFTMLIPANTDIVMTYQFDKALLQFAEYPPDANHGFEIDAAVITVLSLESSSSLYEMRTSTLLLSLSTPDFSMPYNVIILTSTIMGLIFGMLYNLMVKRMVTVEEADKITLQSGLKYKLLKLKEKFLGKKKTKTD.

The signal sequence occupies residues 1-19; that stretch reads MILTLAYFMLGTLLLGVFA. Topologically, residues 20–551 are lumenal; sequence EDTVSQIGIN…STPDFSMPYN (532 aa). Residue Asn184 is glycosylated (N-linked (GlcNAc...) asparagine). The helical transmembrane segment at 552–572 threads the bilayer; the sequence is VIILTSTIMGLIFGMLYNLMV. The Cytoplasmic portion of the chain corresponds to 573 to 610; that stretch reads KRMVTVEEADKITLQSGLKYKLLKLKEKFLGKKKTKTD.

It belongs to the PIGT family. Forms a complex with CDC91, GPI17, GPI8 and GAA1. In terms of processing, the disulfide bond between GPI8 and GPI16 is important for normal enzyme activity.

The protein resides in the endoplasmic reticulum membrane. Its pathway is glycolipid biosynthesis; glycosylphosphatidylinositol-anchor biosynthesis. Functionally, component of the GPI transamidase complex. Involved in transfer of GPI to proteins. In Saccharomyces cerevisiae (strain ATCC 204508 / S288c) (Baker's yeast), this protein is GPI transamidase component GPI16 (GPI16).